The chain runs to 124 residues: Alpha-endosulfine (124 aa).

Residue serine 74 is modified to Phosphoserine; by GWL. Residues 99 to 124 form a disordered region; it reads VTGDHIPTPQDLPQRKNTILTSKLAG. Residues 113-124 show a composition bias toward polar residues; that stretch reads RKNTILTSKLAG.

Belongs to the endosulfine family. Post-translationally, phosphorylation at Ser-74 by gwl during mitosis is essential for interaction with ppp2r2d (PR55-delta) and subsequent inactivation of PP2A.

Its subcellular location is the cytoplasm. Its function is as follows. Protein phosphatase inhibitor that specifically inhibits protein phosphatase 2A (PP2A) during mitosis. When phosphorylated at Ser-67 during mitosis, specifically interacts with ppp2r2d (PR55-delta) and inhibits its activity, leading to inactivation of PP2A, an essential condition to keep cyclin-B1-CDK1 activity high during M phase. In Danio rerio (Zebrafish), this protein is Alpha-endosulfine (ensa).